A 171-amino-acid chain; its full sequence is Lipoprotein signal peptidase (171 aa).

A run of 3 helical transmembrane segments spans residues 8-28 (SFLW…YIVV), 64-84 (WQQY…VYFL), and 99-119 (ALII…GFVV). Residues Asp-120 and Asp-138 contribute to the active site. A helical transmembrane segment spans residues 133-153 (VFNIADIAICIGAGLLALDAF).

This sequence belongs to the peptidase A8 family.

The protein resides in the cell inner membrane. It carries out the reaction Release of signal peptides from bacterial membrane prolipoproteins. Hydrolyzes -Xaa-Yaa-Zaa-|-(S,diacylglyceryl)Cys-, in which Xaa is hydrophobic (preferably Leu), and Yaa (Ala or Ser) and Zaa (Gly or Ala) have small, neutral side chains.. The protein operates within protein modification; lipoprotein biosynthesis (signal peptide cleavage). In terms of biological role, this protein specifically catalyzes the removal of signal peptides from prolipoproteins. This is Lipoprotein signal peptidase from Haemophilus influenzae (strain PittGG).